We begin with the raw amino-acid sequence, 120 residues long: Large ribosomal subunit protein bL12 (120 aa).

The protein belongs to the bacterial ribosomal protein bL12 family. In terms of assembly, homodimer. Part of the ribosomal stalk of the 50S ribosomal subunit. Forms a multimeric L10(L12)X complex, where L10 forms an elongated spine to which 2 to 4 L12 dimers bind in a sequential fashion. Binds GTP-bound translation factors.

Functionally, forms part of the ribosomal stalk which helps the ribosome interact with GTP-bound translation factors. Is thus essential for accurate translation. The sequence is that of Large ribosomal subunit protein bL12 from Shouchella clausii (strain KSM-K16) (Alkalihalobacillus clausii).